The chain runs to 129 residues: Small ribosomal subunit protein uS9 (129 aa).

This sequence belongs to the universal ribosomal protein uS9 family.

The chain is Small ribosomal subunit protein uS9 from Gemmatimonas aurantiaca (strain DSM 14586 / JCM 11422 / NBRC 100505 / T-27).